We begin with the raw amino-acid sequence, 957 residues long: Glycine dehydrogenase (decarboxylating) (957 aa).

Lys708 carries the N6-(pyridoxal phosphate)lysine modification.

The protein belongs to the GcvP family. As to quaternary structure, the glycine cleavage system is composed of four proteins: P, T, L and H. Pyridoxal 5'-phosphate serves as cofactor.

The enzyme catalyses N(6)-[(R)-lipoyl]-L-lysyl-[glycine-cleavage complex H protein] + glycine + H(+) = N(6)-[(R)-S(8)-aminomethyldihydrolipoyl]-L-lysyl-[glycine-cleavage complex H protein] + CO2. Its function is as follows. The glycine cleavage system catalyzes the degradation of glycine. The P protein binds the alpha-amino group of glycine through its pyridoxal phosphate cofactor; CO(2) is released and the remaining methylamine moiety is then transferred to the lipoamide cofactor of the H protein. The chain is Glycine dehydrogenase (decarboxylating) from Escherichia coli (strain SE11).